The following is a 602-amino-acid chain: Elongation factor 4 (602 aa).

Residues 7 to 189 form the tr-type G domain; sequence KYIRNFCIIA…KIVDMIPCPE (183 aa). Residues 19 to 24 and 136 to 139 each bind GTP; these read DHGKST and NKID.

Belongs to the TRAFAC class translation factor GTPase superfamily. Classic translation factor GTPase family. LepA subfamily.

It localises to the cell membrane. The catalysed reaction is GTP + H2O = GDP + phosphate + H(+). In terms of biological role, required for accurate and efficient protein synthesis under certain stress conditions. May act as a fidelity factor of the translation reaction, by catalyzing a one-codon backward translocation of tRNAs on improperly translocated ribosomes. Back-translocation proceeds from a post-translocation (POST) complex to a pre-translocation (PRE) complex, thus giving elongation factor G a second chance to translocate the tRNAs correctly. Binds to ribosomes in a GTP-dependent manner. The polypeptide is Elongation factor 4 (Ruminiclostridium cellulolyticum (strain ATCC 35319 / DSM 5812 / JCM 6584 / H10) (Clostridium cellulolyticum)).